Here is a 366-residue protein sequence, read N- to C-terminus: Chorismate synthase (366 aa).

NADP(+) is bound at residue R48. FMN is bound by residues R125–S127, N241–A242, G285, K300–S304, and R326.

This sequence belongs to the chorismate synthase family. Homotetramer. FMNH2 is required as a cofactor.

The catalysed reaction is 5-O-(1-carboxyvinyl)-3-phosphoshikimate = chorismate + phosphate. It functions in the pathway metabolic intermediate biosynthesis; chorismate biosynthesis; chorismate from D-erythrose 4-phosphate and phosphoenolpyruvate: step 7/7. In terms of biological role, catalyzes the anti-1,4-elimination of the C-3 phosphate and the C-6 proR hydrogen from 5-enolpyruvylshikimate-3-phosphate (EPSP) to yield chorismate, which is the branch point compound that serves as the starting substrate for the three terminal pathways of aromatic amino acid biosynthesis. This reaction introduces a second double bond into the aromatic ring system. This Paracoccus denitrificans (strain Pd 1222) protein is Chorismate synthase.